Consider the following 251-residue polypeptide: Pyrroloquinoline-quinone synthase (251 aa).

This sequence belongs to the PqqC family.

The enzyme catalyses 6-(2-amino-2-carboxyethyl)-7,8-dioxo-1,2,3,4,7,8-hexahydroquinoline-2,4-dicarboxylate + 3 O2 = pyrroloquinoline quinone + 2 H2O2 + 2 H2O + H(+). The protein operates within cofactor biosynthesis; pyrroloquinoline quinone biosynthesis. In terms of biological role, ring cyclization and eight-electron oxidation of 3a-(2-amino-2-carboxyethyl)-4,5-dioxo-4,5,6,7,8,9-hexahydroquinoline-7,9-dicarboxylic-acid to PQQ. This is Pyrroloquinoline-quinone synthase from Klebsiella pneumoniae (strain 342).